A 786-amino-acid polypeptide reads, in one-letter code: LPS-assembly protein LptD (786 aa).

An N-terminal signal peptide occupies residues 1 to 39 (MPPKPLFPNVFPGDGAPRKRRLALALLAVPGLVPAVSYA).

It belongs to the LptD family. As to quaternary structure, component of the lipopolysaccharide transport and assembly complex. Interacts with LptE and LptA.

It localises to the cell outer membrane. In terms of biological role, together with LptE, is involved in the assembly of lipopolysaccharide (LPS) at the surface of the outer membrane. The sequence is that of LPS-assembly protein LptD from Burkholderia ambifaria (strain ATCC BAA-244 / DSM 16087 / CCUG 44356 / LMG 19182 / AMMD) (Burkholderia cepacia (strain AMMD)).